The primary structure comprises 671 residues: Arginine--tRNA ligase (671 aa).

Residues 124–134 (PNVAKPMHVGH) carry the 'HIGH' region motif. Residues 223 to 254 (KSDAKTAKEVSDQSESDENLKPKDKKKLRKNA) are disordered. Basic and acidic residues predominate over residues 224-233 (SDAKTAKEVS).

It belongs to the class-I aminoacyl-tRNA synthetase family. In terms of assembly, monomer.

It localises to the cytoplasm. The catalysed reaction is tRNA(Arg) + L-arginine + ATP = L-arginyl-tRNA(Arg) + AMP + diphosphate. The polypeptide is Arginine--tRNA ligase (Rhodopirellula baltica (strain DSM 10527 / NCIMB 13988 / SH1)).